The sequence spans 358 residues: Heme A synthase (358 aa).

The next 8 membrane-spanning stretches (helical) occupy residues 22 to 42 (IQVWLYTILLLCFAIVLVGGA), 107 to 127 (VLGRFVGLVALLGLVLFWVTK), 133 to 153 (IFLQLLTVPILIAMQGIIGWW), 172 to 192 (LAIHLIAACLVIIFVTYLSRG), 208 to 228 (FAGWLVFLILVEIYFGALVAG), 269 to 289 (FVHRCFSYFLFITAVIHALYV), 302 to 322 (AIFLCIMIVMQAFLGIITLLH), and 324 to 344 (VPISLGLIHQGGALVVLCFSV). H271 contacts heme. Position 332 (H332) interacts with heme.

This sequence belongs to the COX15/CtaA family. Type 2 subfamily. As to quaternary structure, interacts with CtaB. It depends on heme b as a cofactor.

It is found in the cell membrane. It carries out the reaction Fe(II)-heme o + 2 A + H2O = Fe(II)-heme a + 2 AH2. The protein operates within porphyrin-containing compound metabolism; heme A biosynthesis; heme A from heme O: step 1/1. Functionally, catalyzes the conversion of heme O to heme A by two successive hydroxylations of the methyl group at C8. The first hydroxylation forms heme I, the second hydroxylation results in an unstable dihydroxymethyl group, which spontaneously dehydrates, resulting in the formyl group of heme A. In Bartonella bacilliformis (strain ATCC 35685 / KC583 / Herrer 020/F12,63), this protein is Heme A synthase.